A 280-amino-acid chain; its full sequence is Adenosylcobinamide-GDP ribazoletransferase (280 aa).

The next 6 membrane-spanning stretches (helical) occupy residues 44–64 (GVGVLVGALVAAFTALLLFVL), 69–89 (STPLVAAALGTALGVLLTGAF), 111–131 (LVIMKDSRVGAFGAIAVMLAL), 135–155 (VALLALLGAVSATLMVAALFV), 189–209 (ISVAALLTGFIWCFMALALVI), and 226–246 (ALLQALLSAVVASCVAWAVMA).

The protein belongs to the CobS family. Mg(2+) is required as a cofactor.

It localises to the cell inner membrane. It catalyses the reaction alpha-ribazole + adenosylcob(III)inamide-GDP = adenosylcob(III)alamin + GMP + H(+). The enzyme catalyses alpha-ribazole 5'-phosphate + adenosylcob(III)inamide-GDP = adenosylcob(III)alamin 5'-phosphate + GMP + H(+). The protein operates within cofactor biosynthesis; adenosylcobalamin biosynthesis; adenosylcobalamin from cob(II)yrinate a,c-diamide: step 7/7. In terms of biological role, joins adenosylcobinamide-GDP and alpha-ribazole to generate adenosylcobalamin (Ado-cobalamin). Also synthesizes adenosylcobalamin 5'-phosphate from adenosylcobinamide-GDP and alpha-ribazole 5'-phosphate. This is Adenosylcobinamide-GDP ribazoletransferase from Albidiferax ferrireducens (strain ATCC BAA-621 / DSM 15236 / T118) (Rhodoferax ferrireducens).